Consider the following 315-residue polypeptide: Prephenate dehydratase (315 aa).

The region spanning 3 to 189 is the Prephenate dehydratase domain; it reads RIAYLGPEGT…ARTRFVLVGP (187 aa). The ACT domain occupies 203-280; it reads SVVLRIDNAP…ADVRYLGSWP (78 aa).

In terms of assembly, homodimer.

The catalysed reaction is prephenate + H(+) = 3-phenylpyruvate + CO2 + H2O. The protein operates within amino-acid biosynthesis; L-phenylalanine biosynthesis; phenylpyruvate from prephenate: step 1/1. The chain is Prephenate dehydratase (pheA) from Mycobacterium avium (strain 104).